The primary structure comprises 120 residues: uncharacterized protein (120 aa).

Residues C70–K109 form an RING-type zinc finger.

This is an uncharacterized protein from Orgyia pseudotsugata multicapsid polyhedrosis virus (OpMNPV).